Here is a 462-residue protein sequence, read N- to C-terminus: Argininosuccinate lyase (462 aa).

This sequence belongs to the lyase 1 family. Argininosuccinate lyase subfamily.

Its subcellular location is the cytoplasm. It carries out the reaction 2-(N(omega)-L-arginino)succinate = fumarate + L-arginine. It participates in amino-acid biosynthesis; L-arginine biosynthesis; L-arginine from L-ornithine and carbamoyl phosphate: step 3/3. This is Argininosuccinate lyase from Streptococcus agalactiae serotype Ia (strain ATCC 27591 / A909 / CDC SS700).